The sequence spans 71 residues: Large ribosomal subunit protein bL31 (71 aa).

Cys16, Cys18, Cys38, and Cys41 together coordinate Zn(2+).

It belongs to the bacterial ribosomal protein bL31 family. Type A subfamily. As to quaternary structure, part of the 50S ribosomal subunit. Requires Zn(2+) as cofactor.

In terms of biological role, binds the 23S rRNA. This Francisella tularensis subsp. novicida (strain U112) protein is Large ribosomal subunit protein bL31.